The sequence spans 569 residues: Urease subunit alpha (569 aa).

A Urease domain is found at 131–569; sequence GGIDTHIHFI…LPMAQRYFLL (439 aa). Residues histidine 136, histidine 138, and lysine 219 each contribute to the Ni(2+) site. An N6-carboxylysine modification is found at lysine 219. Residue histidine 221 participates in substrate binding. Positions 248 and 274 each coordinate Ni(2+). Histidine 322 functions as the Proton donor in the catalytic mechanism. Position 362 (aspartate 362) interacts with Ni(2+).

The protein belongs to the metallo-dependent hydrolases superfamily. Urease alpha subunit family. In terms of assembly, heterotrimer of UreA (gamma), UreB (beta) and UreC (alpha) subunits. Three heterotrimers associate to form the active enzyme. Requires Ni cation as cofactor. Carboxylation allows a single lysine to coordinate two nickel ions.

Its subcellular location is the cytoplasm. The enzyme catalyses urea + 2 H2O + H(+) = hydrogencarbonate + 2 NH4(+). It functions in the pathway nitrogen metabolism; urea degradation; CO(2) and NH(3) from urea (urease route): step 1/1. The chain is Urease subunit alpha from Synechococcus sp. (strain RCC307).